Consider the following 58-residue polypeptide: U8-ctenitoxin-Pk1a (58 aa).

5 cysteine pairs are disulfide-bonded: Cys2–Cys16, Cys9–Cys22, Cys15–Cys40, Cys24–Cys38, and Cys48–Cys55.

Expressed by the venom gland.

The protein resides in the secreted. Its function is as follows. No toxic effects on mice at dose levels of 5 ug per mouse. May be toxic to insects. The sequence is that of U8-ctenitoxin-Pk1a from Phoneutria keyserlingi (Brazilian wandering spider).